The primary structure comprises 177 residues: Early nodulin-like protein 15 (177 aa).

A signal peptide spans 1–24 (MASSSLLVTIFLCISVFFFSSVNA). The Phytocyanin domain occupies 25 to 129 (NEVTVGGKSG…GQKLRLVVIT (105 aa)). Residues Cys-83 and Cys-117 are joined by a disulfide bond. A glycan (N-linked (GlcNAc...) asparagine) is linked at Asn-84. A lipid anchor (GPI-anchor amidated serine) is attached at Ser-153. Positions 154 to 177 (GAAKLAGGFSVVFGLVLGLWAFFF) are cleaved as a propeptide — removed in mature form.

It belongs to the early nodulin-like (ENODL) family. In terms of tissue distribution, mostly expressed in seedlings, siliques and flowers, and, to a lower extent, in roots, stems and seeds, but barely in leaves.

The protein localises to the cell membrane. May act as a carbohydrate transporter. Required, together with ENODL11, ENODL12, ENODL13, ENODL14 and ENODL15, for male-female communication and pollen tube reception and burst at the synergid cell surface of the female gametophyte. The sequence is that of Early nodulin-like protein 15 from Arabidopsis thaliana (Mouse-ear cress).